Here is a 68-residue protein sequence, read N- to C-terminus: Small ribosomal subunit protein bS21 (68 aa).

The protein belongs to the bacterial ribosomal protein bS21 family.

The protein is Small ribosomal subunit protein bS21 of Jannaschia sp. (strain CCS1).